Consider the following 21-residue polypeptide: Glucan endo-1,3-beta-glucosidase 2 (21 aa).

The interval 1–21 (APGDLLWSDEFDGAAGSAPNP) is disordered.

It catalyses the reaction Hydrolysis of (1-&gt;3)-beta-D-glucosidic linkages in (1-&gt;3)-beta-D-glucans.. The protein is Glucan endo-1,3-beta-glucosidase 2 of Papiliotrema laurentii (Cryptococcus laurentii).